The sequence spans 328 residues: Cytochrome c biogenesis protein CcsA (328 aa).

The next 8 helical transmembrane spans lie at 13–33 (ISFSVVSIVLTIYFLTLLVNL), 46–66 (GIIITFFGITGLLLTRWIYSG), 73–93 (LYESLIFLSWAFSIIHMVSYF), 101–121 (LNTITAPSVIFIQGFATSGLL), 146–166 (MILGYGALLCGSLLSIALLVI), 234–254 (IISLGFIFLTVGILSGAVWAN), 263–283 (WDPKETWAFITWTIFAIYLHI), and 295–315 (AIVALIGFILIWICYFGVNLL).

Belongs to the CcmF/CycK/Ccl1/NrfE/CcsA family. In terms of assembly, may interact with Ccs1.

The protein resides in the plastid. The protein localises to the chloroplast thylakoid membrane. Functionally, required during biogenesis of c-type cytochromes (cytochrome c6 and cytochrome f) at the step of heme attachment. This is Cytochrome c biogenesis protein CcsA from Arabidopsis thaliana (Mouse-ear cress).